Reading from the N-terminus, the 179-residue chain is Large ribosomal subunit protein uL5c (179 aa).

The protein belongs to the universal ribosomal protein uL5 family. In terms of assembly, part of the 50S ribosomal subunit; contacts the 5S rRNA.

It is found in the plastid. The protein localises to the organellar chromatophore. Its function is as follows. Binds 5S rRNA, forms part of the central protuberance of the 50S subunit. This chain is Large ribosomal subunit protein uL5c (rpl5), found in Paulinella chromatophora.